The chain runs to 357 residues: Histidine biosynthesis bifunctional protein HisB (357 aa).

Positions 1–168 are histidinol-phosphatase; it reads MSEKVLFIDR…IVFKLTKKHD (168 aa). The active-site Nucleophile is D9. Residues D9 and D11 each contribute to the Mg(2+) site. The active-site Proton donor is the D11. Zn(2+) is bound by residues C93, H95, C101, and C103. D130 is a Mg(2+) binding site. The segment at 169-357 is imidazoleglycerol-phosphate dehydratase; the sequence is RHAKVVRNTK…KNLPSSKGLL (189 aa).

This sequence in the N-terminal section; belongs to the histidinol-phosphatase family. It in the C-terminal section; belongs to the imidazoleglycerol-phosphate dehydratase family. It depends on Mg(2+) as a cofactor. Zn(2+) serves as cofactor.

The protein resides in the cytoplasm. It carries out the reaction D-erythro-1-(imidazol-4-yl)glycerol 3-phosphate = 3-(imidazol-4-yl)-2-oxopropyl phosphate + H2O. It catalyses the reaction L-histidinol phosphate + H2O = L-histidinol + phosphate. The protein operates within amino-acid biosynthesis; L-histidine biosynthesis; L-histidine from 5-phospho-alpha-D-ribose 1-diphosphate: step 6/9. It participates in amino-acid biosynthesis; L-histidine biosynthesis; L-histidine from 5-phospho-alpha-D-ribose 1-diphosphate: step 8/9. This Buchnera aphidicola subsp. Baizongia pistaciae (strain Bp) protein is Histidine biosynthesis bifunctional protein HisB.